Consider the following 513-residue polypeptide: QWRF motif-containing protein 9 (513 aa).

Polar residues-rich tracts occupy residues 1 to 26, 43 to 55, and 65 to 78; these read MTAATISPSFNANVKQNKPPSFPSES, GTSSFFHQSSPKR, and VTPSSVATNRPQST. Disordered stretches follow at residues 1–89, 115–144, and 184–293; these read MTAA…RREV, GTLERRKTTSSATISKSGGGKQEKLKLSDQ, and VSNR…LRVR. Basic and acidic residues predominate over residues 79-89; sequence PRRESLDRREV. Polar residues-rich tracts occupy residues 202–211 and 244–262; these read ESVSSGSSNG and VDSSVLSPKEANSLSSPRG. A QWRF motif motif is present at residues 334–337; sequence QWQF.

It belongs to the QWRF family.

This chain is QWRF motif-containing protein 9 (QWRF9), found in Arabidopsis thaliana (Mouse-ear cress).